The sequence spans 747 residues: Protein tyrosine phosphatase domain-containing protein 1 (747 aa).

Residues 1 to 36 are disordered; that stretch reads MAAGVLPQNEDPYSTLVNSSGHAAHMDENSGRPAPK. A compositionally biased stretch (polar residues) spans 11 to 21; it reads DPYSTLVNSSG. A Tyrosine-protein phosphatase domain is found at 82–253; sequence YSSWVTDNIL…LAPLRNIFSC (172 aa). The active-site Phosphocysteine intermediate is the cysteine 190. Serine 392, serine 394, and serine 543 each carry phosphoserine. The tract at residues 549–570 is disordered; the sequence is SSPKAQFPHGQETQDSTDLSEA.

This sequence belongs to the protein-tyrosine phosphatase family. Non-receptor class PTPDC1 subfamily.

Its function is as follows. May play roles in cilia formation and/or maintenance. In Mus musculus (Mouse), this protein is Protein tyrosine phosphatase domain-containing protein 1 (Ptpdc1).